Reading from the N-terminus, the 330-residue chain is Ferredoxin--NADP reductase 2 (330 aa).

7 residues coordinate FAD: glutamate 37, glutamine 45, tyrosine 50, valine 90, phenylalanine 124, aspartate 286, and threonine 327.

It belongs to the ferredoxin--NADP reductase type 2 family. As to quaternary structure, homodimer. FAD serves as cofactor.

It carries out the reaction 2 reduced [2Fe-2S]-[ferredoxin] + NADP(+) + H(+) = 2 oxidized [2Fe-2S]-[ferredoxin] + NADPH. This chain is Ferredoxin--NADP reductase 2, found in Shouchella clausii (strain KSM-K16) (Alkalihalobacillus clausii).